Consider the following 123-residue polypeptide: Beta-defensin 126 (123 aa).

The signal sequence occupies residues 1 to 20; the sequence is MKSLLFTLAVFMLLAQLVSG. The in vitro binds to LPS, mediates antimicrobial activity and inhibits LPS-mediated inflammation stretch occupies residues 21 to 63; sequence NLYVKRCLNDIGICKKTCKPEEVRSEHGWVMCGKRKACCVPAD. 3 disulfide bridges follow: cysteine 27–cysteine 58, cysteine 34–cysteine 52, and cysteine 38–cysteine 59.

It belongs to the beta-defensin family. In terms of assembly, homodimer or homooligomer; disulfide-linked. O-glycosylated; glycans contain sialic acids alpha(2,3)-linked to galactose and N-acetylgalactosamine. The C-terminal O-glycosylation contributes substantially to the sperm glyocalyx. As to expression, high-level and epididymis-specific expression. Detected in epithelial cells lining the efferent ductules, initial segment, and cauda regions of the epididymis, but not on spermatozoa.

Its subcellular location is the secreted. In terms of biological role, highly glycosylated atypical beta-defensin involved in several aspects of sperm function. Facilitates sperm transport in the female reproductive tract and contributes to sperm protection against immunodetection; both functions are probably implicating the negative surface charge provided by its O-linked oligosaccharides in the sperm glycocalyx. Involved in binding of sperm to oviductal epithelial cells to form a sperm reservoir until ovulation. Release from the sperm surface during capacitation and ovaluation by an elevation of oviductal fluid pH is unmasking other surface components and allows sperm to penetrate the cumulus matrix and bind to the zona pellucida of the oocyte. In vitro has antimicrobial activity and may inhibit LPS-mediated inflammation. In Macaca fascicularis (Crab-eating macaque), this protein is Beta-defensin 126 (DEFB126).